The sequence spans 320 residues: Phosphate acyltransferase (320 aa).

Belongs to the PlsX family. As to quaternary structure, homodimer. Probably interacts with PlsY.

It is found in the cytoplasm. It carries out the reaction a fatty acyl-[ACP] + phosphate = an acyl phosphate + holo-[ACP]. Its pathway is lipid metabolism; phospholipid metabolism. In terms of biological role, catalyzes the reversible formation of acyl-phosphate (acyl-PO(4)) from acyl-[acyl-carrier-protein] (acyl-ACP). This enzyme utilizes acyl-ACP as fatty acyl donor, but not acyl-CoA. This chain is Phosphate acyltransferase, found in Syntrophomonas wolfei subsp. wolfei (strain DSM 2245B / Goettingen).